Consider the following 192-residue polypeptide: Fe/S biogenesis protein NfuA (192 aa).

[4Fe-4S] cluster contacts are provided by C149 and C152.

This sequence belongs to the NfuA family. In terms of assembly, homodimer. [4Fe-4S] cluster is required as a cofactor.

In terms of biological role, involved in iron-sulfur cluster biogenesis. Binds a 4Fe-4S cluster, can transfer this cluster to apoproteins, and thereby intervenes in the maturation of Fe/S proteins. Could also act as a scaffold/chaperone for damaged Fe/S proteins. This chain is Fe/S biogenesis protein NfuA, found in Shewanella halifaxensis (strain HAW-EB4).